A 1372-amino-acid polypeptide reads, in one-letter code: DNA-directed RNA polymerase subunit beta (1372 aa).

Belongs to the RNA polymerase beta chain family. The RNAP catalytic core consists of 2 alpha, 1 beta, 1 beta' and 1 omega subunit. When a sigma factor is associated with the core the holoenzyme is formed, which can initiate transcription.

It carries out the reaction RNA(n) + a ribonucleoside 5'-triphosphate = RNA(n+1) + diphosphate. DNA-dependent RNA polymerase catalyzes the transcription of DNA into RNA using the four ribonucleoside triphosphates as substrates. The polypeptide is DNA-directed RNA polymerase subunit beta (Nitratidesulfovibrio vulgaris (strain ATCC 29579 / DSM 644 / CCUG 34227 / NCIMB 8303 / VKM B-1760 / Hildenborough) (Desulfovibrio vulgaris)).